The chain runs to 555 residues: Glypican-6 (555 aa).

The signal sequence occupies residues 1–23 (MPSWIRAVILPLSGLLLTLPAAA). Low complexity predominate over residues 348–357 (PALRSARSAP). 2 disordered regions span residues 348–376 (PALR…PTTA) and 480–501 (GNDV…GSGC). Residue S530 is the site of GPI-anchor amidated serine attachment. Positions 531-555 (ASKFSSSLISWSLVCMVLALQRLYR) are cleaved as a propeptide — removed in mature form.

This sequence belongs to the glypican family. In terms of tissue distribution, in the cartilage growth-plate, gradient of expression with highest levels from the proliferative and pre-hypertrophic zones to lowest, if any, in the hypertrophic zones (at protein level).

Its subcellular location is the cell membrane. The protein resides in the secreted. It localises to the extracellular space. In terms of biological role, cell surface proteoglycan that bears heparan sulfate. Putative cell surface coreceptor for growth factors, extracellular matrix proteins, proteases and anti-proteases. Enhances migration and invasion of cancer cells through WNT5A signaling. The protein is Glypican-6 (Gpc6) of Mus musculus (Mouse).